Consider the following 271-residue polypeptide: Methylthioribulose-1-phosphate dehydratase (271 aa).

Residue cysteine 123 coordinates substrate. Residues histidine 141 and histidine 143 each coordinate Zn(2+). Residue glutamate 166 is the Proton donor/acceptor of the active site. Histidine 231 is a binding site for Zn(2+).

This sequence belongs to the aldolase class II family. MtnB subfamily. Zn(2+) is required as a cofactor.

It is found in the cytoplasm. It catalyses the reaction 5-(methylsulfanyl)-D-ribulose 1-phosphate = 5-methylsulfanyl-2,3-dioxopentyl phosphate + H2O. The protein operates within amino-acid biosynthesis; L-methionine biosynthesis via salvage pathway; L-methionine from S-methyl-5-thio-alpha-D-ribose 1-phosphate: step 2/6. In terms of biological role, catalyzes the dehydration of methylthioribulose-1-phosphate (MTRu-1-P) into 2,3-diketo-5-methylthiopentyl-1-phosphate (DK-MTP-1-P). The sequence is that of Methylthioribulose-1-phosphate dehydratase from Candida dubliniensis (strain CD36 / ATCC MYA-646 / CBS 7987 / NCPF 3949 / NRRL Y-17841) (Yeast).